The following is a 280-amino-acid chain: Late embryogenesis abundant protein M17 (280 aa).

The N-terminal stretch at 1-22 (MGNLKSLVLLALLFSFSVAVFA) is a signal peptide. Asn23 carries an N-linked (GlcNAc...) asparagine glycan. Tandem repeats lie at residues 76-97 (GGCR…CCRS) and 131-152 (GGCR…CCRS). A 4 X 22 AA repeats, Cys-rich region spans residues 76 to 262 (GGCRWGCCGG…RGRCRYCCRS (187 aa)). Residues 163-184 (VEPNDVEPQQGGRGGGGGGGGG) form a disordered region. Over residues 173-184 (GGRGGGGGGGGG) the composition is skewed to gly residues. Copy 3 of the repeat occupies 186–207 (GGCRWGCCGGWWRGRCRYCCRS). Positions 218 to 239 (VEPNDVEPQQGGRGGGGGGGGG) are disordered. Over residues 228–239 (GGRGGGGGGGGG) the composition is skewed to gly residues. Residues 241–262 (GGCRWGCCGGWWRGRCRYCCRS) form repeat 4.

Its function is as follows. May be involved in the acquisition of desiccation tolerance during late phase of embryogenesis. In Arabidopsis thaliana (Mouse-ear cress), this protein is Late embryogenesis abundant protein M17.